The chain runs to 400 residues: S-adenosylmethionine synthase (400 aa).

Position 17 (H17) interacts with ATP. D19 contacts Mg(2+). E45 serves as a coordination point for K(+). L-methionine is bound by residues E58 and Q101. Positions 101–111 (QSADIAMGVDQ) are flexible loop. Residues 177–179 (DGK), 244–245 (RF), D253, 259–260 (RK), A276, and K280 contribute to the ATP site. An L-methionine-binding site is contributed by D253. K284 contacts L-methionine.

The protein belongs to the AdoMet synthase family. As to quaternary structure, homotetramer; dimer of dimers. The cofactor is Mg(2+). Requires K(+) as cofactor.

It localises to the cytoplasm. The enzyme catalyses L-methionine + ATP + H2O = S-adenosyl-L-methionine + phosphate + diphosphate. The protein operates within amino-acid biosynthesis; S-adenosyl-L-methionine biosynthesis; S-adenosyl-L-methionine from L-methionine: step 1/1. Catalyzes the formation of S-adenosylmethionine (AdoMet) from methionine and ATP. The overall synthetic reaction is composed of two sequential steps, AdoMet formation and the subsequent tripolyphosphate hydrolysis which occurs prior to release of AdoMet from the enzyme. This is S-adenosylmethionine synthase from Bacillus velezensis (strain DSM 23117 / BGSC 10A6 / LMG 26770 / FZB42) (Bacillus amyloliquefaciens subsp. plantarum).